Consider the following 691-residue polypeptide: 1,4-alpha-glucan-branching enzyme (691 aa).

(1,4-alpha-D-glucosyl)n-binding residues include W80 and K116. D333 serves as the catalytic Nucleophile. Residue E398 is the Proton donor of the active site.

This sequence belongs to the glycosyl hydrolase 13 family. GlgB subfamily.

It is found in the cytoplasm. It catalyses the reaction Transfers a segment of a (1-&gt;4)-alpha-D-glucan chain to a primary hydroxy group in a similar glucan chain.. The protein operates within glycan biosynthesis; glycogen biosynthesis. Glycogen-branching enzyme participates in the glycogen biosynthetic process along with glycogenin and glycogen synthase. Generates alpha-1,6-glucosidic branches from alpha-1,4-linked glucose chains, to increase solubility of the glycogen polymer. In Yarrowia lipolytica (strain CLIB 122 / E 150) (Yeast), this protein is 1,4-alpha-glucan-branching enzyme (GLC3).